We begin with the raw amino-acid sequence, 163 residues long: Nucleotide-binding protein APL_1231 (163 aa).

It belongs to the YajQ family.

Functionally, nucleotide-binding protein. The polypeptide is Nucleotide-binding protein APL_1231 (Actinobacillus pleuropneumoniae serotype 5b (strain L20)).